The primary structure comprises 370 residues: sn-glycerol-3-phosphate import ATP-binding protein UgpC (370 aa).

Residues 4 to 236 enclose the ABC transporter domain; the sequence is LSLKNIAKRY…PATAFVAAFM (233 aa). 38-45 contacts ATP; the sequence is GPSGCGKS.

The protein belongs to the ABC transporter superfamily. sn-glycerol-3-phosphate importer (TC 3.A.1.1.3) family. As to quaternary structure, the complex is composed of two ATP-binding proteins (UgpC), two transmembrane proteins (UgpA and UgpE) and a solute-binding protein (UgpB).

It localises to the cell inner membrane. It carries out the reaction sn-glycerol 3-phosphate(out) + ATP + H2O = sn-glycerol 3-phosphate(in) + ADP + phosphate + H(+). Functionally, part of the ABC transporter complex UgpBAEC involved in sn-glycerol-3-phosphate (G3P) import. Responsible for energy coupling to the transport system. In Chromobacterium violaceum (strain ATCC 12472 / DSM 30191 / JCM 1249 / CCUG 213 / NBRC 12614 / NCIMB 9131 / NCTC 9757 / MK), this protein is sn-glycerol-3-phosphate import ATP-binding protein UgpC.